The following is a 247-amino-acid chain: Small ribosomal subunit protein uS2 (247 aa).

This sequence belongs to the universal ribosomal protein uS2 family.

This chain is Small ribosomal subunit protein uS2, found in Cupriavidus pinatubonensis (strain JMP 134 / LMG 1197) (Cupriavidus necator (strain JMP 134)).